A 95-amino-acid chain; its full sequence is Aspartyl/glutamyl-tRNA(Asn/Gln) amidotransferase subunit C (95 aa).

The protein belongs to the GatC family. As to quaternary structure, heterotrimer of A, B and C subunits.

It catalyses the reaction L-glutamyl-tRNA(Gln) + L-glutamine + ATP + H2O = L-glutaminyl-tRNA(Gln) + L-glutamate + ADP + phosphate + H(+). It carries out the reaction L-aspartyl-tRNA(Asn) + L-glutamine + ATP + H2O = L-asparaginyl-tRNA(Asn) + L-glutamate + ADP + phosphate + 2 H(+). Its function is as follows. Allows the formation of correctly charged Asn-tRNA(Asn) or Gln-tRNA(Gln) through the transamidation of misacylated Asp-tRNA(Asn) or Glu-tRNA(Gln) in organisms which lack either or both of asparaginyl-tRNA or glutaminyl-tRNA synthetases. The reaction takes place in the presence of glutamine and ATP through an activated phospho-Asp-tRNA(Asn) or phospho-Glu-tRNA(Gln). The polypeptide is Aspartyl/glutamyl-tRNA(Asn/Gln) amidotransferase subunit C (Acidiphilium cryptum (strain JF-5)).